We begin with the raw amino-acid sequence, 170 residues long: Crossover junction endodeoxyribonuclease RuvC (170 aa).

Residues aspartate 9, glutamate 70, and aspartate 145 contribute to the active site. 3 residues coordinate Mg(2+): aspartate 9, glutamate 70, and aspartate 145.

The protein belongs to the RuvC family. In terms of assembly, homodimer which binds Holliday junction (HJ) DNA. The HJ becomes 2-fold symmetrical on binding to RuvC with unstacked arms; it has a different conformation from HJ DNA in complex with RuvA. In the full resolvosome a probable DNA-RuvA(4)-RuvB(12)-RuvC(2) complex forms which resolves the HJ. Mg(2+) is required as a cofactor.

It localises to the cytoplasm. It catalyses the reaction Endonucleolytic cleavage at a junction such as a reciprocal single-stranded crossover between two homologous DNA duplexes (Holliday junction).. The RuvA-RuvB-RuvC complex processes Holliday junction (HJ) DNA during genetic recombination and DNA repair. Endonuclease that resolves HJ intermediates. Cleaves cruciform DNA by making single-stranded nicks across the HJ at symmetrical positions within the homologous arms, yielding a 5'-phosphate and a 3'-hydroxyl group; requires a central core of homology in the junction. The consensus cleavage sequence is 5'-(A/T)TT(C/G)-3'. Cleavage occurs on the 3'-side of the TT dinucleotide at the point of strand exchange. HJ branch migration catalyzed by RuvA-RuvB allows RuvC to scan DNA until it finds its consensus sequence, where it cleaves and resolves the cruciform DNA. The chain is Crossover junction endodeoxyribonuclease RuvC from Chlamydia trachomatis serovar L2 (strain ATCC VR-902B / DSM 19102 / 434/Bu).